Here is a 453-residue protein sequence, read N- to C-terminus: Bifunctional protein GlmU (453 aa).

Positions 1-231 are pyrophosphorylase; sequence MERTCLAVIL…EIEMTGCNTR (231 aa). UDP-N-acetyl-alpha-D-glucosamine-binding positions include 10 to 13, lysine 24, glutamine 77, 82 to 83, 105 to 107, glycine 143, glutamate 157, asparagine 172, and asparagine 229; these read LAAG, GT, and YGD. A Mg(2+)-binding site is contributed by aspartate 107. A Mg(2+)-binding site is contributed by asparagine 229. Residues 232-252 form a linker region; sequence AELAVIERFWQERRRHQLMLS. The N-acetyltransferase stretch occupies residues 253–453; it reads GVTMIAPETV…ATKAAKKAKG (201 aa). Residues arginine 318 and lysine 336 each coordinate UDP-N-acetyl-alpha-D-glucosamine. Histidine 348 serves as the catalytic Proton acceptor. Tyrosine 351 and asparagine 362 together coordinate UDP-N-acetyl-alpha-D-glucosamine. Acetyl-CoA-binding positions include alanine 365, 371–372, serine 390, serine 408, and arginine 425; that span reads NY.

This sequence in the N-terminal section; belongs to the N-acetylglucosamine-1-phosphate uridyltransferase family. In the C-terminal section; belongs to the transferase hexapeptide repeat family. As to quaternary structure, homotrimer. Mg(2+) is required as a cofactor.

It is found in the cytoplasm. It carries out the reaction alpha-D-glucosamine 1-phosphate + acetyl-CoA = N-acetyl-alpha-D-glucosamine 1-phosphate + CoA + H(+). The enzyme catalyses N-acetyl-alpha-D-glucosamine 1-phosphate + UTP + H(+) = UDP-N-acetyl-alpha-D-glucosamine + diphosphate. The protein operates within nucleotide-sugar biosynthesis; UDP-N-acetyl-alpha-D-glucosamine biosynthesis; N-acetyl-alpha-D-glucosamine 1-phosphate from alpha-D-glucosamine 6-phosphate (route II): step 2/2. It participates in nucleotide-sugar biosynthesis; UDP-N-acetyl-alpha-D-glucosamine biosynthesis; UDP-N-acetyl-alpha-D-glucosamine from N-acetyl-alpha-D-glucosamine 1-phosphate: step 1/1. Its pathway is bacterial outer membrane biogenesis; LPS lipid A biosynthesis. Its function is as follows. Catalyzes the last two sequential reactions in the de novo biosynthetic pathway for UDP-N-acetylglucosamine (UDP-GlcNAc). The C-terminal domain catalyzes the transfer of acetyl group from acetyl coenzyme A to glucosamine-1-phosphate (GlcN-1-P) to produce N-acetylglucosamine-1-phosphate (GlcNAc-1-P), which is converted into UDP-GlcNAc by the transfer of uridine 5-monophosphate (from uridine 5-triphosphate), a reaction catalyzed by the N-terminal domain. This is Bifunctional protein GlmU from Rhizobium leguminosarum bv. trifolii (strain WSM2304).